The following is a 337-amino-acid chain: Oligopeptide transport ATP-binding protein OppD (337 aa).

Residues 20–269 (LNVKDLRVTF…PVHPYSIGLL (250 aa)) enclose the ABC transporter domain. 56–63 (GESGSGKS) is an ATP binding site.

This sequence belongs to the ABC transporter superfamily. The complex is composed of two ATP-binding proteins (OppD and OppF), two transmembrane proteins (OppB and OppC) and a solute-binding protein (OppA or MppA).

Its subcellular location is the cell inner membrane. The enzyme catalyses a [peptide](out) + ATP + H2O = a [peptide](in) + ADP + phosphate + H(+). It carries out the reaction L-alanyl-gamma-D-glutamyl-meso-2,6-diaminopimelate(out) + ATP + H2O = L-alanyl-gamma-D-glutamyl-meso-2,6-diaminopimelate(in) + ADP + phosphate + H(+). Its function is as follows. Part of the ABC transporter complex OppABCDF involved in the uptake of oligopeptides and of the ABC transporter complex MppA-OppBCDF involved in the uptake of the cell wall murein tripeptide L-alanyl-gamma-D-glutamyl-meso-diaminopimelate. Probably responsible for energy coupling to the transport system. Plays an important nutritional role and is involved in the recycling of cell wall peptides. In Escherichia coli (strain K12), this protein is Oligopeptide transport ATP-binding protein OppD (oppD).